We begin with the raw amino-acid sequence, 631 residues long: Pescadillo homolog (631 aa).

One can recognise a BRCT domain in the interval 321–414 (RLRTLFKGLK…QLLPTNDYFL (94 aa)). Residues 428–442 (SKRDSYIPPEEKALH) show a composition bias toward basic and acidic residues. 3 disordered regions span residues 428 to 471 (SKRD…EADQ), 489 to 561 (YKKY…VDEH), and 602 to 631 (ADNK…KLVK). Phosphoserine occurs at positions 453 and 457. 2 stretches are compositionally biased toward acidic residues: residues 453-471 (SEEE…EADQ) and 498-525 (VNED…EDVD). The span at 526 to 538 (EQTKRKQQEKEKM) shows a compositional bias: basic and acidic residues. The span at 544-553 (KVHKVNKRQV) shows a compositional bias: basic residues. Positions 591–631 (WLLRKKRRNIDADNKEAKKAAKREARKQAAEAAARAAKLVK) form a coiled coil. A compositionally biased stretch (basic and acidic residues) spans 602–619 (ADNKEAKKAAKREARKQA). Low complexity predominate over residues 620-631 (AEAAARAAKLVK).

Belongs to the pescadillo family.

It localises to the nucleus. The protein localises to the nucleolus. It is found in the nucleoplasm. Required for maturation of ribosomal RNAs and formation of the large ribosomal subunit. In Drosophila pseudoobscura pseudoobscura (Fruit fly), this protein is Pescadillo homolog.